A 278-amino-acid polypeptide reads, in one-letter code: Dermonecrotic toxin LbSicTox-betaIA1a (278 aa).

Residue His12 is part of the active site. Mg(2+) contacts are provided by Glu32 and Asp34. The active-site Nucleophile is the His48. Cystine bridges form between Cys52-Cys58 and Cys54-Cys197. Asp92 contributes to the Mg(2+) binding site. An N-linked (GlcNAc...) asparagine glycan is attached at Asn258.

Belongs to the arthropod phospholipase D family. Class II subfamily. Class IIb sub-subfamily. Expressed by the venom gland.

The protein localises to the secreted. The catalysed reaction is an N-(acyl)-sphingosylphosphoethanolamine = an N-(acyl)-sphingosyl-1,3-cyclic phosphate + ethanolamine. It carries out the reaction a 1-acyl-sn-glycero-3-phosphocholine = a 1-acyl-sn-glycero-2,3-cyclic phosphate + choline. It catalyses the reaction a 1-acyl-sn-glycero-3-phosphoethanolamine = a 1-acyl-sn-glycero-2,3-cyclic phosphate + ethanolamine. Its function is as follows. This toxin does not show activity on sphingomyelin (SM) and does not show dermonecrotic activities. This toxin is a member of dermonecrotic toxins that cleave the phosphodiester linkage between the phosphate and headgroup of certain phospholipids (sphingolipid and lysolipid substrates), forming an alcohol (often choline) and a cyclic phosphate. It may act on ceramide phosphoethanolamine (CPE), lysophosphatidylcholine (LPC) and lysophosphatidylethanolamine (LPE), but not on lysophosphatidylserine (LPS), and lysophosphatidylglycerol (LPG). It may act by transphosphatidylation, releasing exclusively cyclic phosphate products as second products. The chain is Dermonecrotic toxin LbSicTox-betaIA1a from Loxosceles boneti (North American fiddleback spider).